The sequence spans 131 residues: DNA-directed RNA polymerase subunit omega (131 aa).

Residues 78 to 131 (DEPEAEAVPALSSAPDAAQSDAMGDVQFDRMTEEDLLRGLEGLVPPAATDDDGE) form a disordered region. Residues 104-115 (QFDRMTEEDLLR) are compositionally biased toward basic and acidic residues.

The protein belongs to the RNA polymerase subunit omega family. The RNAP catalytic core consists of 2 alpha, 1 beta, 1 beta' and 1 omega subunit. When a sigma factor is associated with the core the holoenzyme is formed, which can initiate transcription.

It catalyses the reaction RNA(n) + a ribonucleoside 5'-triphosphate = RNA(n+1) + diphosphate. In terms of biological role, promotes RNA polymerase assembly. Latches the N- and C-terminal regions of the beta' subunit thereby facilitating its interaction with the beta and alpha subunits. This is DNA-directed RNA polymerase subunit omega from Beijerinckia indica subsp. indica (strain ATCC 9039 / DSM 1715 / NCIMB 8712).